A 360-amino-acid polypeptide reads, in one-letter code: mRNA cap guanine-N(7) methyltransferase (360 aa).

The tract at residues 1–62 (MSSSNSRVHE…NRHENNGNAQ (62 aa)) is disordered. Positions 7–19 (RVHEEQPPTENRR) are enriched in basic and acidic residues. Residues 83–358 (SPIIQLKRFN…FYLAFAFEKR (276 aa)) enclose the mRNA cap 0 methyltransferase domain. 92–93 (NN) provides a ligand contact to mRNA. Residues K96, G118, D140, D168, Q191, and Y196 each contribute to the S-adenosyl-L-methionine site.

The protein belongs to the class I-like SAM-binding methyltransferase superfamily. mRNA cap 0 methyltransferase family. As to quaternary structure, interacts with cdk9.

Its subcellular location is the nucleus. The enzyme catalyses a 5'-end (5'-triphosphoguanosine)-ribonucleoside in mRNA + S-adenosyl-L-methionine = a 5'-end (N(7)-methyl 5'-triphosphoguanosine)-ribonucleoside in mRNA + S-adenosyl-L-homocysteine. In terms of biological role, responsible for methylating the 5'-cap structure of mRNAs. The sequence is that of mRNA cap guanine-N(7) methyltransferase (pcm1) from Schizosaccharomyces pombe (strain 972 / ATCC 24843) (Fission yeast).